The sequence spans 1315 residues: ESX secretion system protein EccC (1315 aa).

Residues 1–11 (MSTVLVRRKER) are compositionally biased toward basic residues. The segment at 1-21 (MSTVLVRRKERRQPPQMPRGE) is disordered. At 1-40 (MSTVLVRRKERRQPPQMPRGEILLESPPELPEVVTNSFQN) the chain is on the cytoplasmic side. A helical transmembrane segment spans residues 41–61 (VLMYLPMAAGSAAMVFTFLNH). The Extracellular segment spans residues 62–64 (RNT). Residues 65–85 (LQLVAGGMFALSMFGMMFGQL) form a helical membrane-spanning segment. Topologically, residues 86–1315 (SQQSGERKTK…RLIQTAYRES (1230 aa)) are cytoplasmic. FtsK domains are found at residues 456–656 (GRPL…MESR) and 813–1004 (RDPY…YESE). Residue 479–486 (GATGSGKS) participates in ATP binding. The active site involves glutamate 593. Positions 721-1315 (RPQVVEQPQP…RLIQTAYRES (595 aa)) are binds EsxB. Residues 834–839 (QTGKST), threonine 1031, 1119–1124 (ECGKSN), glutamine 1293, and 1310–1311 (TA) each bind ATP. The FtsK 3 domain occupies 1099-1282 (LSPVYLDFNT…MSGNKDEGIL (184 aa)).

In terms of assembly, the cytosolic domain can form homodimers. Binds EsxB, which leads to multimerization, however EsxA disassembles the multimers, possibly by making EccC-EsxA-EsxB trimers instead of EccC-EsxB-EsxB-EccC tetramers. Forms a complex with EsxA and EsxB, probably wholly mediated by EsxB.

Its subcellular location is the cell membrane. EsxB binding to the third FtsK domain causes multimerization; a subsequent unknown step relieves the allosteric inhibition of linker 2 on FtsK domain 1, activating the ATPase activity; a mutant EsxB ('Ala-98') does not cause multimers to form. Part of the ESX specialized secretion system, which exports proteins from the cell including EsxA (ESAT-6) and EsxB (CFP-10). Has weak intrinsic ATPase activity; probably only the first FtsK domain can hydrolyze ATP. Might be the translocase subunit. This Thermomonospora curvata (strain ATCC 19995 / DSM 43183 / JCM 3096 / KCTC 9072 / NBRC 15933 / NCIMB 10081 / Henssen B9) protein is ESX secretion system protein EccC.